We begin with the raw amino-acid sequence, 167 residues long: Bacterial non-heme ferritin-like protein (167 aa).

The 145-residue stretch at 1 to 145 (MATAGMLLKL…TILDEVRSAK (145 aa)) folds into the Ferritin-like diiron domain.

The protein belongs to the ferritin family. Prokaryotic subfamily.

Its subcellular location is the cytoplasm. In Escherichia coli O157:H7, this protein is Bacterial non-heme ferritin-like protein (ftnB).